A 631-amino-acid chain; its full sequence is Alpha-dioxygenase 2 (631 aa).

The signal sequence occupies residues 1 to 20; sequence MGFSPSSSWFLHPQLHHVVS. Residue H157 coordinates heme b. Y378 functions as the Proton acceptor in the catalytic mechanism. H381 contributes to the heme b binding site. An N-linked (GlcNAc...) asparagine glycan is attached at N583.

This sequence belongs to the peroxidase family. Heme b serves as cofactor. As to expression, expressed in seedlings (cotyledons, young leaves, and hypocotyls), flowers, siliques and old leaves.

In terms of biological role, alpha-dioxygenase that catalyzes the primary oxygenation of fatty acids into oxylipins. May be involved in the senescence process. This Arabidopsis thaliana (Mouse-ear cress) protein is Alpha-dioxygenase 2 (DOX2).